The sequence spans 675 residues: Protein distal antenna (675 aa).

The HTH psq-type domain maps to 5 to 56 (TKGKRPLRHLTATDKIDAIQRIHDGESKASVARDIGVPESTLRGWCKNEEKL). The H-T-H motif DNA-binding region spans 32–52 (KASVARDIGVPESTLRGWCKN). Disordered regions lie at residues 239-269 (QSLR…KNPS), 337-393 (LYSS…PEDT), 458-534 (LNII…SKCN), 546-596 (FQNP…AHKS), and 655-675 (ERQQ…RRRK). A compositionally biased stretch (low complexity) spans 339-368 (SSMPRPSSPQQSSSPPQQHQQVQHHPSTQT). A compositionally biased stretch (pro residues) spans 369–384 (PTPPIVSTPQPTPPSS). A compositionally biased stretch (basic and acidic residues) spans 469–478 (VKSEPEDLSN). Low complexity predominate over residues 479–493 (HNHSSSNAAAVAAPA). Residues 499 to 508 (FNPSPSTSAK) show a composition bias toward polar residues. Over residues 513-528 (QEDDEEQAGPADDESP) the composition is skewed to acidic residues. Residues 559-579 (NLSIRSNNSPRRRSVSPAVSN) are compositionally biased toward low complexity.

Homomers. Interacts with itself, danr, ey and dac to form a complex (or complexes) containing the RD factors.

It localises to the nucleus. Functionally, probable transcription factor with a role in the retinal determination (RD) network. Contributes to differentiation of antenna-specific characteristics. The sequence is that of Protein distal antenna from Aedes aegypti (Yellowfever mosquito).